The sequence spans 356 residues: UDP-N-acetylglucosamine--N-acetylmuramyl-(pentapeptide) pyrophosphoryl-undecaprenol N-acetylglucosamine transferase (356 aa).

UDP-N-acetyl-alpha-D-glucosamine is bound by residues 13-15 (TGG), Asn125, Arg161, Ser189, Ile243, and Gln288.

The protein belongs to the glycosyltransferase 28 family. MurG subfamily.

The protein resides in the cell inner membrane. The enzyme catalyses di-trans,octa-cis-undecaprenyl diphospho-N-acetyl-alpha-D-muramoyl-L-alanyl-D-glutamyl-meso-2,6-diaminopimeloyl-D-alanyl-D-alanine + UDP-N-acetyl-alpha-D-glucosamine = di-trans,octa-cis-undecaprenyl diphospho-[N-acetyl-alpha-D-glucosaminyl-(1-&gt;4)]-N-acetyl-alpha-D-muramoyl-L-alanyl-D-glutamyl-meso-2,6-diaminopimeloyl-D-alanyl-D-alanine + UDP + H(+). Its pathway is cell wall biogenesis; peptidoglycan biosynthesis. Its function is as follows. Cell wall formation. Catalyzes the transfer of a GlcNAc subunit on undecaprenyl-pyrophosphoryl-MurNAc-pentapeptide (lipid intermediate I) to form undecaprenyl-pyrophosphoryl-MurNAc-(pentapeptide)GlcNAc (lipid intermediate II). This Cupriavidus metallidurans (strain ATCC 43123 / DSM 2839 / NBRC 102507 / CH34) (Ralstonia metallidurans) protein is UDP-N-acetylglucosamine--N-acetylmuramyl-(pentapeptide) pyrophosphoryl-undecaprenol N-acetylglucosamine transferase.